A 55-amino-acid polypeptide reads, in one-letter code: Large ribosomal subunit protein bL33 (55 aa).

This sequence belongs to the bacterial ribosomal protein bL33 family.

This chain is Large ribosomal subunit protein bL33, found in Enterobacter sp. (strain 638).